Here is a 1235-residue protein sequence, read N- to C-terminus: Structural maintenance of chromosomes protein 1B (1235 aa).

32–39 (GPNGSGKS) lines the ATP pocket. Residues 156–490 (EEISTSGELI…RSELQNAGID (335 aa)) are a coiled coil. Residues 514–629 (SVFGRLFDLC…ETMEEARHIA (116 aa)) enclose the SMC hinge domain. K648 and K713 each carry N6-acetyllysine. Coiled coils occupy residues 666 to 934 (WDEK…LDCK), 970 to 994 (EKEEAFEIDYSSLKEDLKALQSDQE), and 1022 to 1049 (RALENLKTVRDKFQESTDAFEASRKEAR). K1033 carries the N6-acetyllysine modification.

Belongs to the SMC family. SMC1 subfamily. In terms of assembly, forms a heterodimer with SMC3. Component of a meiosis-specific cohesin complex, probably composed of the SMC1B and SMC3 heterodimer attached via their SMC hinge domain, RAD21 (or its meiosis-specific related protein REC8), which link them, and STAG3, which interacts with RAD21 or REC8. The cohesin complex interacts with the cohesin loading complex subunits NIPBL/Scc2 (via HEAT repeats) and MAU2/Scc4. NIPBL directly contacts all members of the complex, RAD21, SMC1A/B, SMC3 and STAG1.

It localises to the nucleus. The protein localises to the chromosome. Its subcellular location is the centromere. In terms of biological role, meiosis-specific component of cohesin complex. Required for the maintenance of meiotic cohesion, but not, or only to a minor extent, for its establishment. Contributes to axial element (AE) formation and the organization of chromatin loops along the AE. Plays a key role in synapsis, recombination and chromosome movements. The cohesin complex is required for the cohesion of sister chromatids after DNA replication. The cohesin complex apparently forms a large proteinaceous ring within which sister chromatids can be trapped. At anaphase, the complex is cleaved and dissociates from chromatin, allowing sister chromatids to segregate. The meiosis-specific cohesin complex probably replaces mitosis specific cohesin complex when it dissociates from chromatin during prophase I. This chain is Structural maintenance of chromosomes protein 1B (SMC1B), found in Homo sapiens (Human).